The primary structure comprises 1564 residues: MQRGKPCRALPTLKCQTFCQRHGLMFEVVDLRWGIRNIEATDHLTTELCLEEVDRCWKTSIGPAFVALIGDQYGPCLIPSRIDEKEWEVLRDHLTARPSDLELVARYFQRDENAFPPTYVLQAPGTGEACEPEEATLTSVLRSGAQEARRLGLITQEQWQHYHRSVIEWEIERSLLSSEDREQGATVFLREIQDLHKHILEDCALRMVDRLADGCLDADAQNLLSSLKSHITDMHPGVLKTHRLPWSRDLVNPKNKTHACYLKELGEQFVVRANHQVLTRLRELDTAGQELAWLYQEIRHHLWQSSEVIQTFCGRQELLARLGQQLRHDDSKQHTPLVLFGPPGIGKTALMCKLAEQMPRLLGHKTVTVLRLLGTSQMSSDARGLLKSICFQVCLAYGLPLPPAQVLDAHTRVVQFFHTLLHTVSCRNFESLVLLLDAMDDLDSVRHARRVPWLPLNCPPRVHLILSACSGALGVLDTLQRVLLDPEAYWEVKPLSGNQGQQMIQLLLAAARRTLSPVHTDLLWASLPECGNPGRLRLAFEEARKWASFTVPVPLATTAEEATHQLCTRLEQTHGQLLVAHVLGYIVSSRHGLSEAELKDVLSLDDEVLQDVYRDWTPPSKELLRFPPLLWVRLRRDLGYYLARRPVDGFTLLAIAHRQLVEVVRERYLSGSERAKRHGVLADFFSGTWSQGTKKLITLPLVGKPLNLDRKVAPQPLWFSHTVANLRKLKELPYHLLHSGRLEELKQEVLGSMSWISCRGISGGIEDLLDDFDLCAPHLDSPEVGLVREALQLCRPAVELRGMERSLLYTELLARLHFFATSHPALVGQLCQQAQSWFQLCAHPVLVPLGGFLQPPGGPLRATLSGCHKGITAMAWGVEEKLLVIGTQDGIMAVWDMEEQHVIHMLTGHTGEVRCVKIFAKGTLANSASKDYTLHLWNLLSGQEKFTIWDGGSKNPAEPQIWNLHVDEAHKVVYSASGSKINAWNLETAEPVFHILGDASDPWMCMAVLASQATLLTVSRDGVVSLWSSATGKLQGKQHMSSIKEETPTCAVSVQKQGKLVTGFSNGSISLVSSKGDRLLEKLPDAVRFLVVSEDESLLAAGFGRSVRIFLADSRGFRRFMAMDLEHEDMVETAVFGTENNLIITGSLDALIQVWSLSEQGTLLDILEGVGAPVSLLARGGALVASASPQSSSFKVWDLSDAHRSRVPAPFLDRTGLTAVSHNGSYVYFPKIGDKNKVTIWDLAEGEEQDSLDTSSEIRCLEVAEQRKLLFTGLVSGVVLVFPLNSRQDVICIPPPEARKAINCMSLSKCEDRLAIAYDNIVLVLDITSGDPCPVIDGPRYTFYTQLPETLSSVAILTDYRVVYSMTNGDLFLYECATSKAFPLETHRSRVACVEVSHKEQLVVSGSEDALLCLWDLQARKWKFEMSYTSSYCRGVQCACFSKDDKYVYVGLKDRSILVWSVLDGTLLTVQFVHAVVNRIIPTTSGFIAPTRHGYLIRENFQCLSAKASPQDPLKNFKKAMWMVKSRQREELVAAAGAPQDLESESAQGNETKSNKCSQVCLIV.

The 327-residue stretch at 335–661 (TPLVLFGPPG…LLAIAHRQLV (327 aa)) folds into the NACHT domain. Residue 341–348 (GPPGIGKT) participates in ATP binding. WD repeat units follow at residues 866 to 905 (GCHK…VIHM), 908 to 947 (GHTG…EKFT), 956 to 994 (PAEP…PVFH), 998 to 1037 (DASD…LQGK), 1044 to 1082 (KEET…LLEK), 1083 to 1121 (LPDA…RRFM), 1126 to 1165 (EHED…TLLD), 1167 to 1207 (LEGV…RSRV), 1212 to 1251 (LDRT…EQDS), 1253 to 1290 (DTSS…RQDV), 1291 to 1327 (ICIP…VLDI), 1338 to 1376 (GPRY…LYEC), 1380 to 1418 (KAFP…WDLQ), and 1425 to 1462 (EMSY…VWSV).

May interact with HSP90AA1, HSP90AB1 and BAG2. In terms of tissue distribution, expressed at highest levels in prostate, followed by testis, retina, trachea and optic nerve. Also detected in brain, epididymis, lung, vagina and pituitary. In the prostate, tends to be up-regulated during malignant progression compared to normal epithelium (at protein level).

The protein resides in the cytoplasm. It is found in the cytosol. Its function is as follows. May play a role in the control of androgen receptor (AR) protein steady-state levels. This is NACHT domain- and WD repeat-containing protein 1 (NWD1) from Homo sapiens (Human).